The chain runs to 92 residues: Protein S100-A5 (92 aa).

EF-hand domains are found at residues 12–47 and 47–82; these read MVTT…LGEM and MKES…LCMA. The Ca(2+) site is built by Thr-28, Glu-33, Asp-60, Asn-62, Asp-64, Glu-66, and Glu-71.

The protein belongs to the S-100 family. As to quaternary structure, homodimer.

Its function is as follows. Binds calcium, zinc and copper. One subunit can simultaneously bind 2 calcium ions or 2 copper ions plus 1 zinc ion. Calcium and copper ions compete for the same binding sites. This is Protein S100-A5 (S100A5) from Homo sapiens (Human).